A 56-amino-acid polypeptide reads, in one-letter code: Small ribosomal subunit protein uS14 (56 aa).

Zn(2+) contacts are provided by C21, C24, C39, and C42.

This sequence belongs to the universal ribosomal protein uS14 family. Zn(2+) is required as a cofactor.

In Candida glabrata (strain ATCC 2001 / BCRC 20586 / JCM 3761 / NBRC 0622 / NRRL Y-65 / CBS 138) (Yeast), this protein is Small ribosomal subunit protein uS14 (RPS29).